The primary structure comprises 102 residues: MPGQKIRIRLRAYDHRLLDESAKKIVEVAKQTNAKVSGPIPLPTERSLYVVLRSPLKHKDSREQFEKKVHKRLIDIIEPNSKTIDALMKINLPAGVDVEINL.

Belongs to the universal ribosomal protein uS10 family. As to quaternary structure, part of the 30S ribosomal subunit.

Involved in the binding of tRNA to the ribosomes. The sequence is that of Small ribosomal subunit protein uS10 from Fervidobacterium nodosum (strain ATCC 35602 / DSM 5306 / Rt17-B1).